Consider the following 201-residue polypeptide: MFAFLRGELVTVSREEAVVEVSGIGYLLHISSGTSRRLPPEGSQVRLFTHHYVREDAQQLFGFLDEEELQLFRLLLTIGGVGPKLAMAVLSGLSVGEIQEAIVANRPETLYGITGVGKKTASRIILELRDKILKIQPAASGKTAGAPQALQLNEDALAALMTLGFPKPAAQKAISGILETSPGLSVEEVVRAALIAIHNNF.

The domain I stretch occupies residues 1–64; it reads MFAFLRGELV…EDAQQLFGFL (64 aa). The segment at 65–143 is domain II; it reads DEEELQLFRL…KIQPAASGKT (79 aa). Residues 144–154 form a flexible linker region; sequence AGAPQALQLNE. The interval 154–201 is domain III; sequence EDALAALMTLGFPKPAAQKAISGILETSPGLSVEEVVRAALIAIHNNF.

It belongs to the RuvA family. As to quaternary structure, homotetramer. Forms an RuvA(8)-RuvB(12)-Holliday junction (HJ) complex. HJ DNA is sandwiched between 2 RuvA tetramers; dsDNA enters through RuvA and exits via RuvB. An RuvB hexamer assembles on each DNA strand where it exits the tetramer. Each RuvB hexamer is contacted by two RuvA subunits (via domain III) on 2 adjacent RuvB subunits; this complex drives branch migration. In the full resolvosome a probable DNA-RuvA(4)-RuvB(12)-RuvC(2) complex forms which resolves the HJ.

The protein localises to the cytoplasm. Its function is as follows. The RuvA-RuvB-RuvC complex processes Holliday junction (HJ) DNA during genetic recombination and DNA repair, while the RuvA-RuvB complex plays an important role in the rescue of blocked DNA replication forks via replication fork reversal (RFR). RuvA specifically binds to HJ cruciform DNA, conferring on it an open structure. The RuvB hexamer acts as an ATP-dependent pump, pulling dsDNA into and through the RuvAB complex. HJ branch migration allows RuvC to scan DNA until it finds its consensus sequence, where it cleaves and resolves the cruciform DNA. The protein is Holliday junction branch migration complex subunit RuvA of Chlorobaculum tepidum (strain ATCC 49652 / DSM 12025 / NBRC 103806 / TLS) (Chlorobium tepidum).